Reading from the N-terminus, the 434-residue chain is Protein ENHANCED PSEUDOMONAS SUSCEPTIBILITY 1 (434 aa).

Asp-376 serves as the catalytic Proton acceptor.

It belongs to the plant acyltransferase family.

Functionally, required for pathogen-induced salicylic acid (SA) accumulation and SA-mediated resistance to virulent and avirulent pathogens (e.g. P.syringae). This Arabidopsis thaliana (Mouse-ear cress) protein is Protein ENHANCED PSEUDOMONAS SUSCEPTIBILITY 1.